The sequence spans 211 residues: RILP-like protein 2 (211 aa).

The interval 1-32 (MEEPPVREEEEEEGEEDEERDEVGPEGALGKS) is disordered. Residues 8-21 (EEEEEEGEEDEERD) show a composition bias toward acidic residues. The region spanning 24–106 (GPEGALGKSP…RKEVEGLRRQ (83 aa)) is the RH1 domain. Residues 70 to 164 (RVLEMLEALV…VQEELQCYKS (95 aa)) are a coiled coil. Residue Ser-107 is modified to Phosphoserine. The 72-residue stretch at 130–201 (RPRFTLQELR…NKEEKTIIKK (72 aa)) folds into the RH2 domain. Residues 166–190 (LIPPREGPGGRREKDAVVTSAKNAG) are disordered.

This sequence belongs to the RILPL family. As to quaternary structure, homodimer. Interacts with RAC1. Interacts (via N-terminus) with MYO5A, the interaction is required for its role in dendrite formation. Interacts with RAB8A; interaction is dependent on the phosphorylation of RAB8A on 'Thr-72'. Interacts with RAB10 and RAB12; interaction is dependent on the phosphorylation of 'Thr-73' on RAB10 and 'Ser-105' on RAB12. As to expression, widely expressed. Expressed at higher level in lung.

The protein resides in the cytoplasm. Its subcellular location is the cytosol. It is found in the cytoskeleton. It localises to the microtubule organizing center. The protein localises to the centrosome. The protein resides in the cell projection. Its subcellular location is the cilium. Its function is as follows. Involved in cell shape and neuronal morphogenesis, positively regulating the establishment and maintenance of dendritic spines. Plays a role in cellular protein transport, including protein transport away from primary cilia. May function via activation of RAC1 and PAK1. The sequence is that of RILP-like protein 2 (RILPL2) from Homo sapiens (Human).